Here is a 96-residue protein sequence, read N- to C-terminus: Small ribosomal subunit protein uS19 (96 aa).

Positions 1–30 (MARSIKKGPFADKHLTKKVEDANKGNKKSV) are disordered. Residues 9–24 (PFADKHLTKKVEDANK) show a composition bias toward basic and acidic residues.

This sequence belongs to the universal ribosomal protein uS19 family.

Its function is as follows. Protein S19 forms a complex with S13 that binds strongly to the 16S ribosomal RNA. This Anaeromyxobacter sp. (strain Fw109-5) protein is Small ribosomal subunit protein uS19.